Consider the following 579-residue polypeptide: V-type ATP synthase alpha chain (579 aa).

238–245 (GPFGAGKT) lines the ATP pocket.

Belongs to the ATPase alpha/beta chains family.

The catalysed reaction is ATP + H2O + 4 H(+)(in) = ADP + phosphate + 5 H(+)(out). Produces ATP from ADP in the presence of a proton gradient across the membrane. The V-type alpha chain is a catalytic subunit. The polypeptide is V-type ATP synthase alpha chain (Borrelia hermsii (strain HS1 / DAH)).